The primary structure comprises 515 residues: mRNA export factor ICP27 homolog (515 aa).

Positions 230, 335, 337, and 342 each coordinate Zn(2+). A CHC2-type zinc finger spans residues 230–342; that stretch reads CVFNDNGHGD…SNHKCDDVSC (113 aa). The span at 398–408 shows a compositional bias: polar residues; sequence YSTNHDLPQTS. Residues 398 to 422 are disordered; the sequence is YSTNHDLPQTSHRSHKNHGTPKVKS. Residues 409–422 are compositionally biased toward basic residues; that stretch reads HRSHKNHGTPKVKS.

Belongs to the HHV-1 ICP27 protein family.

It localises to the virion tegument. The protein localises to the virion. It is found in the host nucleus. The protein resides in the host cytoplasm. Its function is as follows. Immediate early (EI) protein that plays many roles during productive infection including regulation of viral gene expression and nuclear export of intronless viral RNAs. In Human herpesvirus 6A (strain Uganda-1102) (HHV-6 variant A), this protein is mRNA export factor ICP27 homolog.